Consider the following 366-residue polypeptide: Carbamoyl phosphate synthase small chain (366 aa).

The interval 1–174 (MQEIPAILVL…GERYTVDNPD (174 aa)) is CPSase. Residues serine 48, glycine 226, and glycine 228 each coordinate L-glutamine. In terms of domain architecture, Glutamine amidotransferase type-1 spans 178–366 (HVVAFDYGIK…FTELMERLKN (189 aa)). The active-site Nucleophile is the cysteine 256. Positions 257, 260, 298, 300, and 301 each coordinate L-glutamine. Active-site residues include histidine 340 and glutamate 342.

It belongs to the CarA family. Composed of two chains; the small (or glutamine) chain promotes the hydrolysis of glutamine to ammonia, which is used by the large (or ammonia) chain to synthesize carbamoyl phosphate. Tetramer of heterodimers (alpha,beta)4.

It carries out the reaction hydrogencarbonate + L-glutamine + 2 ATP + H2O = carbamoyl phosphate + L-glutamate + 2 ADP + phosphate + 2 H(+). It catalyses the reaction L-glutamine + H2O = L-glutamate + NH4(+). Its pathway is amino-acid biosynthesis; L-arginine biosynthesis; carbamoyl phosphate from bicarbonate: step 1/1. The protein operates within pyrimidine metabolism; UMP biosynthesis via de novo pathway; (S)-dihydroorotate from bicarbonate: step 1/3. Its function is as follows. Small subunit of the glutamine-dependent carbamoyl phosphate synthetase (CPSase). CPSase catalyzes the formation of carbamoyl phosphate from the ammonia moiety of glutamine, carbonate, and phosphate donated by ATP, constituting the first step of 2 biosynthetic pathways, one leading to arginine and/or urea and the other to pyrimidine nucleotides. The small subunit (glutamine amidotransferase) binds and cleaves glutamine to supply the large subunit with the substrate ammonia. The protein is Carbamoyl phosphate synthase small chain of Chlorobaculum tepidum (strain ATCC 49652 / DSM 12025 / NBRC 103806 / TLS) (Chlorobium tepidum).